We begin with the raw amino-acid sequence, 1170 residues long: DNA-directed RNA polymerase subunit beta (1170 aa).

Belongs to the RNA polymerase beta chain family. As to quaternary structure, the RNAP catalytic core consists of 2 alpha, 1 beta, 1 beta' and 1 omega subunit. When a sigma factor is associated with the core the holoenzyme is formed, which can initiate transcription.

It catalyses the reaction RNA(n) + a ribonucleoside 5'-triphosphate = RNA(n+1) + diphosphate. Its function is as follows. DNA-dependent RNA polymerase catalyzes the transcription of DNA into RNA using the four ribonucleoside triphosphates as substrates. The chain is DNA-directed RNA polymerase subunit beta from Corynebacterium urealyticum (strain ATCC 43042 / DSM 7109).